A 528-amino-acid chain; its full sequence is Phosphoenolpyruvate carboxykinase (ATP) (528 aa).

3 residues coordinate substrate: Arg56, Tyr192, and Lys198. ATP contacts are provided by residues Lys198, His217, and 233 to 241 (GLSGTGKTT). Lys198 and His217 together coordinate Mn(2+). Residue Asp254 participates in Mn(2+) binding. 3 residues coordinate ATP: Glu282, Arg319, and Thr444. Arg319 contacts substrate.

Belongs to the phosphoenolpyruvate carboxykinase (ATP) family. Requires Mn(2+) as cofactor.

It is found in the cytoplasm. It catalyses the reaction oxaloacetate + ATP = phosphoenolpyruvate + ADP + CO2. It functions in the pathway carbohydrate biosynthesis; gluconeogenesis. Functionally, involved in the gluconeogenesis. Catalyzes the conversion of oxaloacetate (OAA) to phosphoenolpyruvate (PEP) through direct phosphoryl transfer between the nucleoside triphosphate and OAA. This Bacillus cereus (strain ATCC 10987 / NRS 248) protein is Phosphoenolpyruvate carboxykinase (ATP).